Reading from the N-terminus, the 389-residue chain is MGQNLSTSNPLGFFPDHQLDPAFRANTNNPDWDFNPNKDTWPDANKVGAGAFGLGFTPPHGGLLGWSPQAQGIMQTLPANPPPASTNRQSGRQPTPLSPPLRTTHPQAMHWNSTTFHQTLQDPRVRGLYFPAGGSSSGTVNPVPTTTSPISSIFSRIGDPALNMENITSGFLGPLLVLQAGFFLLTRILTIPQSLDSWWTSLNFLGGTTVCLGQNSQSPISNHSPTSCPPTCPGYRWMCLRRFIIFLFILLLCLIFLLVLLDYQGMLPVCPLIPGSSTTSTGSCRTCTTPAQGISMYPSCCCTKPSDGNCTCIPIPSSWAFGKFLWEWASARFSWLSLLVPFVQWFVGLSPIVWLSVIWMMWYWGPSLYSILSPFLPLLPIFFCLWAYI.

Methionine 1 is modified (N-acetylmethionine). The N-myristoyl glycine; by host moiety is linked to residue glycine 2. The pre-S1 stretch occupies residues 2–108 (GQNLSTSNPL…PPLRTTHPQA (107 aa)). Positions 2 to 163 (GQNLSTSNPL…FSRIGDPALN (162 aa)) are pre-S. Residues 2-170 (GQNLSTSNPL…ALNMENITSG (169 aa)) are Virion surface; in external conformation-facing. Over 2–242 (GQNLSTSNPL…PGYRWMCLRR (241 aa)) the chain is Intravirion; in internal conformation. A disordered region spans residues 76 to 102 (TLPANPPPASTNRQSGRQPTPLSPPLR). Polar residues predominate over residues 85 to 95 (STNRQSGRQPT). The pre-S2 stretch occupies residues 109–163 (MHWNSTTFHQTLQDPRVRGLYFPAGGSSSGTVNPVPTTTSPISSIFSRIGDPALN). Residues 171–191 (FLGPLLVLQAGFFLLTRILTI) traverse the membrane as a helical segment. Topologically, residues 192 to 242 (PQSLDSWWTSLNFLGGTTVCLGQNSQSPISNHSPTSCPPTCPGYRWMCLRR) are intravirion; in external conformation. The chain crosses the membrane as a helical span at residues 243–263 (FIIFLFILLLCLIFLLVLLDY). The Virion surface segment spans residues 264–337 (QGMLPVCPLI…WASARFSWLS (74 aa)). N-linked (GlcNAc...) asparagine; by host glycosylation is present at asparagine 309. A helical membrane pass occupies residues 338–358 (LLVPFVQWFVGLSPIVWLSVI). The Intravirion segment spans residues 359 to 364 (WMMWYW). Residues 365–387 (GPSLYSILSPFLPLLPIFFCLWA) traverse the membrane as a helical segment. Topologically, residues 388 to 389 (YI) are virion surface.

This sequence belongs to the orthohepadnavirus major surface antigen family. As to quaternary structure, in its internal form (Li-HBsAg), interacts with the capsid protein and with the isoform S. Interacts with host chaperone CANX. Associates with host chaperone CANX through its pre-S2 N glycan; this association may be essential for isoform M proper secretion. In terms of assembly, interacts with isoform L. Interacts with the antigens of satellite virus HDV (HDVAgs); this interaction is required for encapsidation of HDV genomic RNA. Post-translationally, isoform M is N-terminally acetylated by host at a ratio of 90%, and N-glycosylated by host at the pre-S2 region. In terms of processing, myristoylated.

Its subcellular location is the virion membrane. Its function is as follows. The large envelope protein exists in two topological conformations, one which is termed 'external' or Le-HBsAg and the other 'internal' or Li-HBsAg. In its external conformation the protein attaches the virus to cell receptors and thereby initiating infection. This interaction determines the species specificity and liver tropism. This attachment induces virion internalization predominantly through caveolin-mediated endocytosis. The large envelope protein also assures fusion between virion membrane and endosomal membrane. In its internal conformation the protein plays a role in virion morphogenesis and mediates the contact with the nucleocapsid like a matrix protein. Functionally, the middle envelope protein plays an important role in the budding of the virion. It is involved in the induction of budding in a nucleocapsid independent way. In this process the majority of envelope proteins bud to form subviral lipoprotein particles of 22 nm of diameter that do not contain a nucleocapsid. This chain is Large envelope protein, found in Hepatitis B virus genotype D subtype adw (isolate United Kingdom/adyw/1979) (HBV-D).